A 636-amino-acid chain; its full sequence is 1-deoxy-D-xylulose-5-phosphate synthase 2 (636 aa).

Residues H78 and 119 to 121 contribute to the thiamine diphosphate site; that span reads AHS. D150 provides a ligand contact to Mg(2+). Thiamine diphosphate is bound by residues 151 to 152, N179, Y288, and E370; that span reads GS. N179 lines the Mg(2+) pocket.

It belongs to the transketolase family. DXPS subfamily. As to quaternary structure, homodimer. The cofactor is Mg(2+). Requires thiamine diphosphate as cofactor.

It catalyses the reaction D-glyceraldehyde 3-phosphate + pyruvate + H(+) = 1-deoxy-D-xylulose 5-phosphate + CO2. It functions in the pathway metabolic intermediate biosynthesis; 1-deoxy-D-xylulose 5-phosphate biosynthesis; 1-deoxy-D-xylulose 5-phosphate from D-glyceraldehyde 3-phosphate and pyruvate: step 1/1. Catalyzes the acyloin condensation reaction between C atoms 2 and 3 of pyruvate and glyceraldehyde 3-phosphate to yield 1-deoxy-D-xylulose-5-phosphate (DXP). The protein is 1-deoxy-D-xylulose-5-phosphate synthase 2 of Jannaschia sp. (strain CCS1).